Here is a 103-residue protein sequence, read N- to C-terminus: Small ribosomal subunit protein uS10 (103 aa).

Belongs to the universal ribosomal protein uS10 family. Part of the 30S ribosomal subunit.

Its function is as follows. Involved in the binding of tRNA to the ribosomes. The chain is Small ribosomal subunit protein uS10 from Ralstonia pickettii (strain 12J).